A 310-amino-acid chain; its full sequence is Metal ABC transporter substrate-binding lipoprotein ScbA (310 aa).

Positions 1-19 are cleaved as a signal peptide; the sequence is MKKCRFLVLLLLAFVGLAA. The N-palmitoyl cysteine moiety is linked to residue C20. Residue C20 is the site of S-diacylglycerol cysteine attachment. H68, H140, E206, and D281 together coordinate a divalent metal cation.

Belongs to the bacterial solute-binding protein 9 family.

The protein localises to the cell membrane. Functionally, part of an ATP-binding cassette (ABC) transport system involved in metal import. Binds a metal with high affinity and specificity and delivers it to the membrane permease for translocation into the cytoplasm. Part of an ATP-driven transport system for manganese. Does not exhibit adhesion properties. The protein is Metal ABC transporter substrate-binding lipoprotein ScbA (scbA) of Streptococcus cristatus.